The primary structure comprises 505 residues: Formate--tetrahydrofolate ligase (505 aa).

Belongs to the formate--tetrahydrofolate ligase family.

It catalyses the reaction (6S)-5,6,7,8-tetrahydrofolate + formate + ATP = (6R)-10-formyltetrahydrofolate + ADP + phosphate. It participates in one-carbon metabolism; tetrahydrofolate interconversion. The polypeptide is Formate--tetrahydrofolate ligase (fhs) (Bifidobacterium longum (strain NCC 2705)).